Here is a 561-residue protein sequence, read N- to C-terminus: MCLYALILVFLAAFTAGGHPSSLPVVDTLQGKVLGKYVSLEGFTQPVAVFLGVPFAKPPLGSLRFAPPQPAEPWSFVKNTTSYPPMCSQDPVAGQIVNDLLTNWEENISLQFSEDCLYLNIYTPADLTKRDRLPVMVWIHGGGLVLGGASTYDGLALSTHENVVVVVIQYRLGIWGFFSTGDEHSRGNWGHLDQVAALHWVQDNIDNFGGDPGSVTIFGESAGGESVSVLVLSPLAKNLFHKAISESGVALTAGLVKKNTRPLAEKIAVVSGCKSTTSASMVHCLRQKTEEELLETTLKLNLFSLDLHGDSRQSYPFVPTVLDGVVLPKMPEEILAEKDFNTVPYIVGINKQEFGWILPTMMNYPPSDMKLDPMTATSLLKKSSFLLNLPEEAIPVAVEKYLRHTDDPDRNKDQLLELIGDVIFGVPSVIVSRGHRDAGARTYMYEFQYRPSFSSKMKPSTVVGDHGDEIYSVFGAPILRGGTSKEEINLSKMMMKFWANFARNGNPNGQGLPHWPEYDQKEGYLQIGATTQQAQKLKEKEVAFWSELLAMKPLHAGHTEL.

The signal sequence occupies residues 1 to 18 (MCLYALILVFLAAFTAGG). N-linked (GlcNAc...) asparagine glycosylation is found at N79 and N107. A disulfide bond links C87 and C116. Catalysis depends on S221, which acts as the Acyl-ester intermediate. An intrachain disulfide couples C273 to C284. Residues E353 and H466 each act as charge relay system in the active site. The N-linked (GlcNAc...) asparagine glycan is linked to N489. The Prevents secretion from ER motif lies at 558-561 (HTEL).

Belongs to the type-B carboxylesterase/lipase family. As to expression, expressed in liver.

Its subcellular location is the endoplasmic reticulum lumen. It localises to the microsome membrane. The catalysed reaction is a carboxylic ester + H2O = an alcohol + a carboxylate + H(+). It carries out the reaction all-trans-retinyl hexadecanoate + H2O = all-trans-retinol + hexadecanoate + H(+). In terms of biological role, involved in the detoxification of xenobiotics and in the activation of ester and amide prodrugs. Hydrolyzes retinyl esters. The sequence is that of Carboxylesterase 1E (Ces1e) from Rattus norvegicus (Rat).